A 166-amino-acid chain; its full sequence is Cofilin-1 (166 aa).

An N-acetylalanine modification is found at Ala-2. A phosphoserine mark is found at Ser-3 and Ser-8. The 150-residue stretch at 4-153 folds into the ADF-H domain; sequence GVAVSDGVIK…KDRCTLAEKL (150 aa). Lys-13 carries the N6-acetyllysine modification. Thr-25 is modified (phosphothreonine). The Nuclear localization signal motif lies at 30-34; the sequence is KKRKK. Ser-41 bears the Phosphoserine mark. Residue Thr-63 is modified to Phosphothreonine. The residue at position 68 (Tyr-68) is a Phosphotyrosine. Position 73 is an N6-acetyllysine (Lys-73). Tyr-82 carries the post-translational modification Phosphotyrosine. A Glycyl lysine isopeptide (Lys-Gly) (interchain with G-Cter in SUMO2) cross-link involves residue Lys-132. Residue Tyr-140 is modified to Phosphotyrosine. At Lys-144 the chain carries N6-acetyllysine. Ser-156 carries the post-translational modification Phosphoserine.

The protein belongs to the actin-binding proteins ADF family. Can bind G- and F-actin in a 1:1 ratio of cofilin to actin. It is a major component of intranuclear and cytoplasmic actin rods. Interacts with the subcortical maternal complex (SCMC) via interaction with TLE6 and NLRP5. Interacts with C9orf72. Inactivated by phosphorylation on Ser-3. Phosphorylated on Ser-3 in resting cells. Dephosphorylated by PDXP/chronophin; this restores its activity in promoting actin filament depolymerization. The phosphorylation of Ser-24 may prevent recognition of the nuclear localization signal. Phosphorylated via a ARRB1-RAC1-LIMK1-PAK1 cascade upon active ligand stimulation of atypical chemokine receptor ACKR2. As to expression, widely distributed in various tissues. Not found in skeletal muscle.

It localises to the nucleus matrix. It is found in the cytoplasm. The protein resides in the cytoskeleton. Its subcellular location is the cell projection. The protein localises to the ruffle membrane. It localises to the lamellipodium membrane. It is found in the lamellipodium. The protein resides in the growth cone. Its subcellular location is the axon. In terms of biological role, binds to F-actin and exhibits pH-sensitive F-actin depolymerizing activity. In conjunction with the subcortical maternal complex (SCMC), plays an essential role for zygotes to progress beyond the first embryonic cell divisions via regulation of actin dynamics. Required for the centralization of the mitotic spindle and symmetric division of zygotes. Plays a role in the regulation of cell morphology and cytoskeletal organization in epithelial cells. Required for the up-regulation of atypical chemokine receptor ACKR2 from endosomal compartment to cell membrane, increasing its efficiency in chemokine uptake and degradation. Required for neural tube morphogenesis and neural crest cell migration. In Mus musculus (Mouse), this protein is Cofilin-1 (Cfl1).